Here is a 658-residue protein sequence, read N- to C-terminus: Carnitine O-palmitoyltransferase 2, mitochondrial (658 aa).

The N-terminal 25 residues, 1–25 (MVPRLLLRAWPRGPAVGPGAPSRPL), are a transit peptide targeting the mitochondrion. The Mitochondrial matrix portion of the chain corresponds to 26–178 (SAGSGPGQYL…GLLEPEVFHL (153 aa)). Position 69 is an N6-succinyllysine (Lys-69). Lys-79 is modified (N6-acetyllysine). Lys-85 is modified (N6-succinyllysine). An intramembrane region (note=Mitochondrial inner membrane) is located at residues 179–208 (NPAKSDTDTFKRLIRFVPSSLSWYGAYLVN). Residues 209–658 (AYPLDMSQYF…DALEGKSIKS (450 aa)) are Mitochondrial matrix-facing. Lys-239 carries the N6-acetyllysine; alternate modification. Residue Lys-239 is modified to N6-succinyllysine; alternate. Residue Lys-305 is modified to N6-acetyllysine. His-372 acts as the Proton acceptor in catalysis. Lys-418 bears the N6-acetyllysine; alternate mark. Residue Lys-418 is modified to N6-succinyllysine; alternate. Lys-424 and Lys-439 each carry N6-succinyllysine. Position 452–464 (452–464 (GKEFLKKQKLSPD)) interacts with CoA. (R)-carnitine contacts are provided by Tyr-486, Ser-488, and Thr-499. An N6-acetyllysine; alternate mark is found at Lys-510 and Lys-544. 2 positions are modified to N6-succinyllysine; alternate: Lys-510 and Lys-544.

It belongs to the carnitine/choline acetyltransferase family.

It is found in the mitochondrion inner membrane. It carries out the reaction (R)-carnitine + hexadecanoyl-CoA = O-hexadecanoyl-(R)-carnitine + CoA. The catalysed reaction is octanoyl-CoA + (R)-carnitine = O-octanoyl-(R)-carnitine + CoA. It catalyses the reaction decanoyl-CoA + (R)-carnitine = O-decanoyl-(R)-carnitine + CoA. The enzyme catalyses dodecanoyl-CoA + (R)-carnitine = O-dodecanoyl-R-carnitine + CoA. It carries out the reaction tetradecanoyl-CoA + (R)-carnitine = O-tetradecanoyl-(R)-carnitine + CoA. The catalysed reaction is (R)-carnitine + octadecanoyl-CoA = O-octadecanoyl-(R)-carnitine + CoA. It catalyses the reaction eicosanoyl-CoA + (R)-carnitine = O-eicosanoyl-(R)-carnitine + CoA. The enzyme catalyses (9Z)-tetradecenoyl-CoA + (R)-carnitine = O-(9Z)-tetradecenoyl-(R)-carnitine + CoA. It carries out the reaction (5Z)-tetradecenoyl-CoA + (R)-carnitine = O-(5Z)-tetradecenoyl-(R)-carnitine + CoA. The catalysed reaction is (R)-carnitine + (9Z)-octadecenoyl-CoA = O-(9Z)-octadecenoyl-(R)-carnitine + CoA. It catalyses the reaction 4,8-dimethylnonanoyl-CoA + (R)-carnitine = O-4,8-dimethylnonanoyl-(R)-carnitine + CoA. Its pathway is lipid metabolism; fatty acid beta-oxidation. Functionally, involved in the intramitochondrial synthesis of acylcarnitines from accumulated acyl-CoA metabolites. Reconverts acylcarnitines back into the respective acyl-CoA esters that can then undergo beta-oxidation, an essential step for the mitochondrial uptake of long-chain fatty acids and their subsequent beta-oxidation in the mitochondrion. Active with medium (C8-C12) and long-chain (C14-C18) acyl-CoA esters. The polypeptide is Carnitine O-palmitoyltransferase 2, mitochondrial (CPT2) (Macaca fascicularis (Crab-eating macaque)).